A 1075-amino-acid polypeptide reads, in one-letter code: MTIAHHCIFLVILAFLALINVASGATEACLPAGQRKSGMNINFYQYSLKDSSTYSNAAYMAYGYASKTKLGSVGGQTDISIDYNIPCVSSSGTFPCPQEDSYGNWGCKGMGACSNSQGIAYWSTDLFGFYTTPTNVTLEMTGYFLPPQTGSYTFSFATVDDSAILSVGGSIAFECCAQEQPPITSTNFTINGIKPWDGSLPDNITGTVYMYAGYYYPLKVVYSNAVSWGTLPISVELPDGTTVSDNFEGYVYSFDDDLSQSNCTIPDPSIHTTSTITTTTEPWTGTFTSTSTEMTTITDTNGQLTDETVIVIRTPTTASTITTTTEPWTGTFTSTSTEMTTVTGTNGQPTDETVIVIRTPTSEGLITTTTEPWTGTFTSTSTEMTTVTGTNGQPTDETVIVIRTPTSEGLITTTTEPWTGTFTSTSTEVTTITGTNGQPTDETVIVIRTPTSEGLITTTTEPWTGTFTSTSTEMTTVTGTNGQPTDETVIVIRTPTSEGLISTTTEPWTGTFTSTSTEVTTITGTNGQPTDETVIVIRTPTSEGLITTTTEPWTGTFTSTSTEMTTVTGTNGQPTDETVIVIRTPTSEGLITRTTEPWTGTFTSTSTEVTTITGTNGQPTDETVIVIRTPTTAISSSLSSSSGQITSSITSSRPIITPFYPSNGTSVISSSVISSSVTSSLVTSSSFISSSVISSSTTTSTSIFSESSTSSVIPTSSSTSGSSESKTSSASSSSSSSSISSESPKSPTNSSSSLPPVTSATTGQETASSLPPATTTKTSEQTTLVTVTSCESHVCTESISSAIVSTATVTVSGVTTEYTTWCPISTTETTKQTKGTTEQTKGTTEQTTETTKQTTVVTISSCESDICSKTASPAIVSTSTATINGVTTEYTTWCPISTTESKQQTTLVTVTSCESGVCSETTSPAIVSTATATVNDVVTVYPTWRPQTTNEQSVSSKMNSATSETTTNTGAAETKTAVTSSLSRFNHAETQTASATDVIGHSSSVVSVSETGNTMSLTSSGLSTMSQQPRSTPASSMVGSSTASLEISTYAGSANSLLAGSGLSVFIASLLLAII.

The N-terminal stretch at 1–24 is a signal peptide; the sequence is MTIAHHCIFLVILAFLALINVASG. A PA14 domain is found at 74 to 249; sequence GGQTDISIDY…GTTVSDNFEG (176 aa). N-linked (GlcNAc...) asparagine glycosylation is found at Asn135, Asn187, Asn203, and Asn262. Residues 197 to 240 form a sugar recognition region; sequence DGSLPDNITGTVYMYAGYYYPLKVVYSNAVSWGTLPISVELPDG. 8 repeat units span residues 278 to 322, 323 to 367, 368 to 412, 413 to 457, 458 to 502, 503 to 547, 548 to 592, and 593 to 637. Positions 278–637 are 8 X 45 AA approximate tandem repeats, Thr-rich; it reads TTTEPWTGTF…RTPTTAISSS (360 aa). Composition is skewed to low complexity over residues 322-345, 367-390, 457-480, and 547-570; these read TTTTEPWTGTFTSTSTEMTTVTGT. Disordered stretches follow at residues 322–349, 366–394, 456–484, and 546–574; these read TTTTEPWTGTFTSTSTEMTTVTGTNGQP and ITTTTEPWTGTFTSTSTEMTTVTGTNGQP. N-linked (GlcNAc...) asparagine glycosylation occurs at Asn663. A run of 2 repeats spans residues 667–686 and 687–706. Residues 667 to 706 form a 2 X 20 AA approximate tandem repeats, Ser-rich region; that stretch reads VISSSVISSSVTSSLVTSSSFISSSVISSSTTTSTSIFSE. Positions 702-762 are enriched in low complexity; the sequence is SIFSESSTSS…SLPPVTSATT (61 aa). The interval 702–781 is disordered; that stretch reads SIFSESSTSS…PATTTKTSEQ (80 aa). An N-linked (GlcNAc...) asparagine glycan is attached at Asn749. Positions 763-781 are enriched in polar residues; that stretch reads GQETASSLPPATTTKTSEQ. Repeat copies occupy residues 775-825, 847-897, and 898-948. The 3 X 51 AA approximate repeats, Ser/Thr-rich stretch occupies residues 775-948; that stretch reads TTKTSEQTTL…TVYPTWRPQT (174 aa). A compositionally biased stretch (polar residues) spans 948-958; it reads TTNEQSVSSKM. 2 disordered regions span residues 948–980 and 1016–1038; these read TTNEQSVSSKMNSATSETTTNTGAAETKTAVTS and SLTSSGLSTMSQQPRSTPASSMV. Low complexity-rich tracts occupy residues 959–977 and 1016–1026; these read NSATSETTTNTGAAETKTA and SLTSSGLSTMS. Positions 1027 to 1038 are enriched in polar residues; that stretch reads QQPRSTPASSMV. Gly1052 is lipidated: GPI-anchor amidated glycine. A propeptide spans 1053 to 1075 (removed in mature form); it reads SANSLLAGSGLSVFIASLLLAII.

This sequence belongs to the flocculin family. Extensively O-glycosylated. In terms of processing, the GPI-anchor is attached to the protein in the endoplasmic reticulum and serves to target the protein to the cell surface. There, the glucosamine-inositol phospholipid moiety is cleaved off and the GPI-modified mannoprotein is covalently attached via its lipidless GPI glycan remnant to the 1,6-beta-glucan of the outer cell wall layer.

It is found in the secreted. The protein resides in the cell wall. It localises to the membrane. Functionally, cell wall protein that participates directly in adhesive cell-cell interactions during yeast flocculation, a reversible, asexual and Ca(2+)-dependent process in which cells adhere to form aggregates (flocs) consisting of thousands of cells. The lectin-like protein sticks out of the cell wall of flocculent cells and selectively binds mannose residues in the cell walls of adjacent cells. Activity is inhibited by mannose, but not by glucose, maltose, sucrose or galactose. The protein is Flocculation protein FLO5 (FLO5) of Saccharomyces cerevisiae (strain ATCC 204508 / S288c) (Baker's yeast).